The chain runs to 63 residues: ATPase inhibitor, mitochondrial (63 aa).

Residues 1 to 23 (TAGATGATRQDGSTDAFEKREKA) are disordered. A coiled-coil region spans residues 18–62 (EKREKAQEDLYIRQHEKEQLEALKESLKKQKKSLDDLEBKIDDLT).

This sequence belongs to the ATPase inhibitor family.

The protein resides in the mitochondrion. In terms of biological role, this protein forms a one-to-one complex with ATPase to inhibit the enzyme activity completely. The sequence is that of ATPase inhibitor, mitochondrial from Cyberlindnera jadinii (Torula yeast).